We begin with the raw amino-acid sequence, 83 residues long: Bowman-Birk type seed trypsin and chymotrypsin inhibitor (83 aa).

7 cysteine pairs are disulfide-bonded: Cys-18–Cys-72, Cys-19–Cys-34, Cys-22–Cys-68, Cys-24–Cys-32, Cys-42–Cys-49, Cys-46–Cys-61, and Cys-51–Cys-59.

It belongs to the Bowman-Birk serine protease inhibitor family.

In Vigna unguiculata (Cowpea), this protein is Bowman-Birk type seed trypsin and chymotrypsin inhibitor.